Reading from the N-terminus, the 449-residue chain is 23S rRNA (uracil(1939)-C(5))-methyltransferase RlmD (449 aa).

Residues 1-66 form the TRAM domain; sequence MGRSRHHNKL…AKFDEAKVVE (66 aa). [4Fe-4S] cluster is bound by residues C79, C85, C88, and C169. Positions 280, 309, 314, 330, 357, and 379 each coordinate S-adenosyl-L-methionine. C405 serves as the catalytic Nucleophile.

This sequence belongs to the class I-like SAM-binding methyltransferase superfamily. RNA M5U methyltransferase family. RlmD subfamily.

It catalyses the reaction uridine(1939) in 23S rRNA + S-adenosyl-L-methionine = 5-methyluridine(1939) in 23S rRNA + S-adenosyl-L-homocysteine + H(+). In terms of biological role, catalyzes the formation of 5-methyl-uridine at position 1939 (m5U1939) in 23S rRNA. This chain is 23S rRNA (uracil(1939)-C(5))-methyltransferase RlmD, found in Francisella tularensis subsp. novicida (strain U112).